Reading from the N-terminus, the 220-residue chain is Chaperone protein TorD (220 aa).

The protein belongs to the TorD/DmsD family. TorD subfamily.

It localises to the cytoplasm. Functionally, involved in the biogenesis of TorA. Acts on TorA before the insertion of the molybdenum cofactor and, as a result, probably favors a conformation of the apoenzyme that is competent for acquiring the cofactor. This Vibrio cholerae serotype O1 (strain M66-2) protein is Chaperone protein TorD.